We begin with the raw amino-acid sequence, 321 residues long: Chemotaxis protein CheV1 (321 aa).

The region spanning 19–177 is the CheW-like domain; the sequence is ELQLLCFRLG…IEKMLIDVFP (159 aa). The Response regulatory domain occupies 198–319; it reads CVLLADDSPS…IQRVVKQFLE (122 aa). At D252 the chain carries 4-aspartylphosphate.

Functionally, plays an essential role in chemotaxis signal transduction system in order to colonize the host stomach. May act as a phosphate sink to control the flow of phosphate to CheAY. In Helicobacter pylori (strain ATCC 700392 / 26695) (Campylobacter pylori), this protein is Chemotaxis protein CheV1.